A 110-amino-acid polypeptide reads, in one-letter code: Nucleoid-associated protein NFA_2940 (110 aa).

This sequence belongs to the YbaB/EbfC family. As to quaternary structure, homodimer.

It localises to the cytoplasm. It is found in the nucleoid. Binds to DNA and alters its conformation. May be involved in regulation of gene expression, nucleoid organization and DNA protection. The polypeptide is Nucleoid-associated protein NFA_2940 (Nocardia farcinica (strain IFM 10152)).